A 192-amino-acid chain; its full sequence is Glycerol-3-phosphate acyltransferase (192 aa).

A run of 5 helical transmembrane segments spans residues 4-24, 54-74, 80-100, 112-132, and 154-174; these read MFWL…AILL, LAIL…LIAS, IAQQ…PVYF, AGVL…AWLL, and LLAW…LLIV.

Belongs to the PlsY family. As to quaternary structure, probably interacts with PlsX.

It is found in the cell inner membrane. The catalysed reaction is an acyl phosphate + sn-glycerol 3-phosphate = a 1-acyl-sn-glycero-3-phosphate + phosphate. Its pathway is lipid metabolism; phospholipid metabolism. Catalyzes the transfer of an acyl group from acyl-phosphate (acyl-PO(4)) to glycerol-3-phosphate (G3P) to form lysophosphatidic acid (LPA). This enzyme utilizes acyl-phosphate as fatty acyl donor, but not acyl-CoA or acyl-ACP. In Pseudomonas savastanoi pv. phaseolicola (strain 1448A / Race 6) (Pseudomonas syringae pv. phaseolicola (strain 1448A / Race 6)), this protein is Glycerol-3-phosphate acyltransferase.